The primary structure comprises 180 residues: Small ribosomal subunit protein uS5 (180 aa).

The S5 DRBM domain occupies 24–87; sequence MIEKLVAVNR…EQARKNLVSV (64 aa).

The protein belongs to the universal ribosomal protein uS5 family. In terms of assembly, part of the 30S ribosomal subunit. Contacts proteins S4 and S8.

In terms of biological role, with S4 and S12 plays an important role in translational accuracy. Its function is as follows. Located at the back of the 30S subunit body where it stabilizes the conformation of the head with respect to the body. This chain is Small ribosomal subunit protein uS5, found in Stenotrophomonas maltophilia (strain R551-3).